Reading from the N-terminus, the 460-residue chain is UDP-glucuronate 4-epimerase 6 (460 aa).

Helical transmembrane passes span 41-61 (ATLL…PPLS) and 111-131 (GLSV…SLAL). 113–144 (SVLVTGAAGFVGSHCSLALRKRGDGVLGFDNF) is a binding site for NAD(+). Y263 functions as the Proton acceptor in the catalytic mechanism.

Belongs to the NAD(P)-dependent epimerase/dehydratase family. In terms of assembly, homodimer. In roots, leaf veins, siliques, flowers, pollen and stems.

Its subcellular location is the golgi apparatus. It is found in the golgi stack membrane. It catalyses the reaction UDP-alpha-D-glucuronate = UDP-alpha-D-galacturonate. Functionally, involved in the synthesis of the negatively charged monosaccharide that forms the backbone of pectic cell wall components. This is UDP-glucuronate 4-epimerase 6 (GAE6) from Arabidopsis thaliana (Mouse-ear cress).